Reading from the N-terminus, the 622-residue chain is Low affinity potassium transport system protein Kup (622 aa).

The next 12 membrane-spanning stretches (helical) occupy residues 9-29 (LPAI…TSPL), 49-69 (VFGF…IKYL), 103-123 (VIMG…TPAI), 137-157 (PQLD…LFMI), 165-185 (VGKL…VLGL), 213-233 (VSFI…ALYA), 247-267 (WFTV…ALLL), 276-296 (PFFL…AALA), 337-357 (IYIP…IVSF), 363-383 (LAAA…ILST), 396-416 (FVAL…SANL), and 419-439 (LLSG…IMTT).

The protein belongs to the HAK/KUP transporter (TC 2.A.72) family.

It localises to the cell inner membrane. The catalysed reaction is K(+)(in) + H(+)(in) = K(+)(out) + H(+)(out). Its function is as follows. Responsible for the low-affinity transport of potassium into the cell. Likely operates as a K(+):H(+) symporter. This Salmonella typhi protein is Low affinity potassium transport system protein Kup.